The sequence spans 247 residues: UPF0280 protein MmarC7_0482 (247 aa).

Belongs to the UPF0280 family.

This chain is UPF0280 protein MmarC7_0482, found in Methanococcus maripaludis (strain C7 / ATCC BAA-1331).